A 98-amino-acid polypeptide reads, in one-letter code: UPF0358 protein LCA_1078 (98 aa).

The protein belongs to the UPF0358 family.

The polypeptide is UPF0358 protein LCA_1078 (Latilactobacillus sakei subsp. sakei (strain 23K) (Lactobacillus sakei subsp. sakei)).